The following is a 353-amino-acid chain: Galectin-9 (353 aa).

Residues 17–147 form the Galectin 1 domain; it reads FTGPIQGGLQ…CLKLSFITFQ (131 aa). A beta-D-galactoside contacts are provided by residues Asn-47, His-60, Arg-64, Asn-74, and 81-87; that span reads WGPEERK. A disordered region spans residues 167–186; sequence QFPRTPKGRKQKTQNFRPAH. Residues 225 to 353 form the Galectin 2 domain; sequence FYTPIPNGLY…GDIQLTHVQT (129 aa). Residues His-265, Arg-269, Thr-279, and 285–291 contribute to the a beta-D-galactoside site; that span reads WGQEERS.

Homodimer. In terms of tissue distribution, accentuated expression in liver and thymus of embryo, detected in embryonic heart, brain, lung, liver, and kidney. Highly expressed in adult thymus, small intestine, and liver, and to a lesser extent in lung, kidney, spleen, cardiac, and skeletal muscle. Barely detectable in brain and reticulocyte. Expressed in placenta, uterus and decidua during pregnancy. Expressed in CD4+ T-cells with higher levels in iTreg cells than other T-cell types and sustained high levels throughout iTreg cell differentiation (at protein level). Expressed in myeloid cells in lung. Constitutively expressed in microglia. Isoform 1 is expressed exclusively in the small intestine. Isoform 2 expression in decidua increases in pathological pregnancy from gestation day 7.5 to 13.5 and it is higher than in normal pregnancy. Isoform 3 expression in decidua is higher in normal pregnancy than in pathological pregnancy.

The protein localises to the cytoplasm. The protein resides in the nucleus. It localises to the secreted. In terms of biological role, binds galactosides. Has high affinity for the Forssman pentasaccharide. Ligand for HAVCR2/TIM3. Binding to HAVCR2 induces T-helper type 1 lymphocyte (Th1) death. Also stimulates bactericidal activity in infected macrophages by causing macrophage activation and IL1B secretion which restricts intracellular bacterial growth. Ligand for P4HB; the interaction retains P4HB at the cell surface of Th2 T-helper cells, increasing disulfide reductase activity at the plasma membrane, altering the plasma membrane redox state and enhancing cell migration. Ligand for CD44; the interaction enhances binding of SMAD3 to the FOXP3 promoter, leading to up-regulation of FOXP3 expression and increased induced regulatory T (iTreg) cell stability and suppressive function. Promotes ability of mesenchymal stromal cells to suppress T-cell proliferation. Expands regulatory T-cells and induces cytotoxic T-cell apoptosis following virus infection. Activates ERK1/2 phosphorylation inducing cytokine (IL-6, IL-8, IL-12) and chemokine (CCL2) production in mast and dendritic cells. Inhibits degranulation and induces apoptosis of mast cells. Induces maturation and migration of dendritic cells. Inhibits natural killer (NK) cell function. Can transform NK cell phenotype from peripheral to decidual during pregnancy. Astrocyte derived galectin-9 enhances microglial TNF production. May play a role in thymocyte-epithelial interactions relevant to the biology of the thymus. May provide the molecular basis for urate flux across cell membranes, allowing urate that is formed during purine metabolism to efflux from cells and serving as an electrogenic transporter that plays an important role in renal and gastrointestinal urate excretion. Highly selective to the anion urate. Functionally, acts as an eosinophil chemoattractant. It also inhibits angiogenesis. Suppresses IFNG production by natural killer cells. The sequence is that of Galectin-9 (Lgals9) from Mus musculus (Mouse).